Consider the following 505-residue polypeptide: Maturase K (505 aa).

Belongs to the intron maturase 2 family. MatK subfamily.

Its subcellular location is the plastid. It is found in the chloroplast. Its function is as follows. Usually encoded in the trnK tRNA gene intron. Probably assists in splicing its own and other chloroplast group II introns. This is Maturase K from Blitum bonus-henricus (Good King Henry).